The following is a 168-amino-acid chain: Thiosulfate dehydrogenase [quinone] small subunit (168 aa).

A helical transmembrane segment spans residues 6–26; the sequence is IIGIIFAILVVGWILATGQWA.

As to quaternary structure, heterodimer of a large and a small subunit in a 2:2 stoichiometry. TQO may associate with the terminal oxidase formed by doxBCE. The N-terminus is blocked. In terms of processing, glycosylated.

Its subcellular location is the cell membrane. The enzyme catalyses 6-decylubiquinone + 2 thiosulfate = 6-decylubiquinol + tetrathionate. Its activity is regulated as follows. Inhibited by sulfite, metabisulfite and dithonite. Functionally, TQO plays a role in sulfur oxidation and is proposed to couple sulfur oxidation to dioxygen reduction; caldariellaquinone or sulfolobus quinone seem to serve to transfer electrons to the electron transport chain terminal oxidase formed by DoxBCE. The sequence is that of Thiosulfate dehydrogenase [quinone] small subunit (doxA) from Acidianus ambivalens (Desulfurolobus ambivalens).